We begin with the raw amino-acid sequence, 546 residues long: MAQLAGQPVVILPEGTQRYVGRDAQRLNILAARIIAETVRTTLGPKGMDKMLVDSLGDIVITNDGATILDEMDIQHPAAKMMVEVAKTQDKEAGDGTTTAVVIAGELLRKAEELLDQNIHPSIIIKGYALAAEKAQEILDEIAKDVDVEDREILKKAAVTSITGKAAEEEREYLAEIAVEAVKQVAEKVGETYKVDLDNIKFEKKEGGSVKDTQLIKGVVIDKEVVHPGMPKRVEGAKIALINEALEVKETETDAEIRITSPEQLQAFLEQEEKMLREMVDKIKEVGANVVFVQKGIDDLAQHYLAKYGIMAVRRVKKSDMEKLAKATGAKIVTNVRDLTPEDLGEAELVEQRKVAGENMIFVEGCKNPKAVTILIRGGTEHVVDEVERALEDAVKVVKDIVEDGKIVAAGGAPEIELAIRLDEYAKEVGGKEQLAIEAFAEALKVIPRTLAENAGLDPIETLVKVIAAHKEKGPTIGVDVFEGEPADMLERGVIAPVRVPKQAIKSASEAAIMILRIDDVIAASKLEKDKEGGKGGSEDFGSDLD.

This sequence belongs to the TCP-1 chaperonin family. In terms of assembly, forms a Heterooligomeric complex of two stacked eight-membered rings.

Functionally, molecular chaperone; binds unfolded polypeptides in vitro, and has a weak ATPase activity. The sequence is that of Thermosome subunit beta (thsB) from Thermococcus kodakarensis (strain ATCC BAA-918 / JCM 12380 / KOD1) (Pyrococcus kodakaraensis (strain KOD1)).